Here is a 184-residue protein sequence, read N- to C-terminus: PLASMODESMATA CALLOSE-BINDING PROTEIN 3 (184 aa).

The N-terminal stretch at Met1–Gly19 is a signal peptide. Cysteines 22 and 84 form a disulfide. The tract at residues Ser109 to Ile146 is disordered. Over residues Thr113–Ser139 the composition is skewed to low complexity. The GPI-anchor amidated serine moiety is linked to residue Ser158. The propeptide at Phe159–Ser184 is removed in mature form.

Post-translationally, contains two additional disulfide bonds. Expressed in the shoot apical region and in young leaves but also detected in the laminar and vasculature of mature leaves.

The protein localises to the cell membrane. It is found in the cell junction. It localises to the plasmodesma. The chain is PLASMODESMATA CALLOSE-BINDING PROTEIN 3 (PDCB3) from Arabidopsis thaliana (Mouse-ear cress).